Here is a 463-residue protein sequence, read N- to C-terminus: Probable mannan endo-1,4-beta-mannosidase F (463 aa).

A signal peptide spans 1–18 (MRSLSSIALLSVVGAASA). The CBM1 domain occupies 19 to 54 (QAGPWAQCGGKSFSGSSECASGWKCQELNEWFSQCV). A disordered region spans residues 57-78 (AESTTPTVSSTPTPTDAPSVSI). A compositionally biased stretch (low complexity) spans 59–77 (STTPTVSSTPTPTDAPSVS). The ser-rich linker stretch occupies residues 75–118 (SVSITASATTGINKSISVSSASKSTPLPSSSSASPSPRPTGSGS). An N-linked (GlcNAc...) asparagine glycan is attached at N87. The span at 93-118 (SSASKSTPLPSSSSASPSPRPTGSGS) shows a compositional bias: low complexity. Residues 93 to 121 (SSASKSTPLPSSSSASPSPRPTGSGSFAK) form a disordered region. The catalytic stretch occupies residues 119–463 (FAKADGLQFS…MDHMENVNKN (345 aa)). Positions 171 and 285 each coordinate substrate. Residue E286 is the Proton donor of the active site. Y361 contributes to the substrate binding site. Residue E395 is the Nucleophile of the active site. W424 lines the substrate pocket.

The protein belongs to the glycosyl hydrolase 5 (cellulase A) family.

The protein localises to the secreted. It catalyses the reaction Random hydrolysis of (1-&gt;4)-beta-D-mannosidic linkages in mannans, galactomannans and glucomannans.. In terms of biological role, endo-1,4-mannanase, a crucial enzyme for depolymerization of seed galactomannans and wood galactoglucomannans. The protein is Probable mannan endo-1,4-beta-mannosidase F (manF) of Aspergillus flavus (strain ATCC 200026 / FGSC A1120 / IAM 13836 / NRRL 3357 / JCM 12722 / SRRC 167).